The primary structure comprises 528 residues: Dihydromonacolin L monooxygenase LovA (528 aa).

The Cytoplasmic portion of the chain corresponds to M1–H23. Residues G24–L44 traverse the membrane as a helical; Signal-anchor for type II membrane protein segment. At C45–L528 the chain is on the lumenal side. C465 is a heme binding site.

It belongs to the cytochrome P450 family. Heme serves as cofactor.

It localises to the membrane. The protein resides in the endoplasmic reticulum membrane. It catalyses the reaction dihydromonacolin L carboxylate + reduced [NADPH--hemoprotein reductase] + O2 = monacolin L carboxylate + oxidized [NADPH--hemoprotein reductase] + 2 H2O + H(+). It carries out the reaction monacolin L carboxylate + reduced [NADPH--hemoprotein reductase] + O2 = monacolin J carboxylate + oxidized [NADPH--hemoprotein reductase] + H2O + H(+). It functions in the pathway polyketide biosynthesis; lovastatin biosynthesis. In terms of biological role, dihydromonacolin L monooxygenase; part of the gene cluster that mediates the biosynthesis of lovastatin (also known as mevinolin, mevacor or monacolin K), a hypolipidemic inhibitor of (3S)-hydroxymethylglutaryl-coenzyme A (HMG-CoA) reductase (HMGR). The first step in the biosynthesis of lovastatin is the production of dihydromonacolin L acid by the lovastatin nonaketide synthase lovB and the trans-acting enoyl reductase lovC via condensation of one acetyl-CoA unit and 8 malonyl-CoA units. Dihydromonacolin L acid is released from lovB by the thioesterase lovG. Next, dihydromonacolin L acid is oxidized by the dihydromonacolin L monooxygenase lovA twice to form monacolin J acid. The 2-methylbutyrate moiety of lovastatin is synthesized by the lovastatin diketide synthase lovF via condensation of one acetyl-CoA unit and one malonyl-CoA unit. Finally, the covalent attachment of this moiety to monacolin J acid is catalyzed by the transesterase lovD to yield lovastatin. LovD has broad substrate specificity and can also convert monacolin J to simvastatin using alpha-dimethylbutanoyl-S-methyl-3-mercaptopropionate (DMB-S-MMP) as the thioester acyl donor, and can also catalyze the reverse reaction and function as hydrolase in vitro. LovD has much higher activity with LovF-bound 2-methylbutanoate than with free diketide substrates. The chain is Dihydromonacolin L monooxygenase LovA from Aspergillus terreus.